The sequence spans 426 residues: Glutamate-1-semialdehyde 2,1-aminomutase (426 aa).

Position 265 is an N6-(pyridoxal phosphate)lysine (lysine 265).

It belongs to the class-III pyridoxal-phosphate-dependent aminotransferase family. HemL subfamily. Homodimer. Pyridoxal 5'-phosphate is required as a cofactor.

The protein resides in the cytoplasm. The catalysed reaction is (S)-4-amino-5-oxopentanoate = 5-aminolevulinate. It functions in the pathway porphyrin-containing compound metabolism; protoporphyrin-IX biosynthesis; 5-aminolevulinate from L-glutamyl-tRNA(Glu): step 2/2. The protein is Glutamate-1-semialdehyde 2,1-aminomutase of Shigella boydii serotype 4 (strain Sb227).